A 506-amino-acid polypeptide reads, in one-letter code: Aspartic proteinase A1 (506 aa).

Residues 1 to 24 (MKIYSRTVAVSLIVSFLLCFSAFA) form the signal peptide. A propeptide spans 25 to 64 (ERNDGTFRVGLKKLKLDSKNRLAARVESKQEKPLRAYRLG) (activation peptide). A Peptidase A1 domain is found at 82–503 (YYGEIAIGTP…DFGNEQVGFA (422 aa)). Asp-100 is an active-site residue. Disulfide bonds link Cys-113–Cys-119 and Cys-278–Cys-282. Asp-287 is an active-site residue. The Saposin B-type domain maps to 312–417 (VVSQQCKTVV…NELCERLPSP (106 aa)). 4 disulfides stabilise this stretch: Cys-317–Cys-411, Cys-342–Cys-383, Cys-348–Cys-380, and Cys-425–Cys-462. A glycan (N-linked (GlcNAc...) asparagine) is linked at Asn-397.

The protein belongs to the peptidase A1 family. In terms of tissue distribution, expressed in roots, leaves, stems, petals, carpels, seed pods and dry seeds.

It localises to the vacuole. In terms of biological role, involved in the breakdown of propeptides of storage proteins in protein-storage vacuoles. Possesses aspartic protease activity in vitro. This Arabidopsis thaliana (Mouse-ear cress) protein is Aspartic proteinase A1 (APA1).